Reading from the N-terminus, the 137-residue chain is Nucleoside diphosphate kinase (137 aa).

K9, F57, R85, T91, R102, and N112 together coordinate ATP. H115 functions as the Pros-phosphohistidine intermediate in the catalytic mechanism.

It belongs to the NDK family. As to quaternary structure, homotetramer. Mg(2+) serves as cofactor.

It is found in the cytoplasm. The enzyme catalyses a 2'-deoxyribonucleoside 5'-diphosphate + ATP = a 2'-deoxyribonucleoside 5'-triphosphate + ADP. It catalyses the reaction a ribonucleoside 5'-diphosphate + ATP = a ribonucleoside 5'-triphosphate + ADP. Major role in the synthesis of nucleoside triphosphates other than ATP. The ATP gamma phosphate is transferred to the NDP beta phosphate via a ping-pong mechanism, using a phosphorylated active-site intermediate. This is Nucleoside diphosphate kinase from Pelobacter propionicus (strain DSM 2379 / NBRC 103807 / OttBd1).